Consider the following 623-residue polypeptide: DNA-directed RNA polymerase subunit beta' (623 aa).

Zn(2+)-binding residues include Cys-70, Cys-72, Cys-85, and Cys-88. Positions 466, 468, and 470 each coordinate Mg(2+).

This sequence belongs to the RNA polymerase beta' chain family. RpoC1 subfamily. As to quaternary structure, in plastids the minimal PEP RNA polymerase catalytic core is composed of four subunits: alpha, beta, beta', and beta''. When a (nuclear-encoded) sigma factor is associated with the core the holoenzyme is formed, which can initiate transcription. Mg(2+) is required as a cofactor. Zn(2+) serves as cofactor.

The protein localises to the plastid. The protein resides in the chloroplast. It catalyses the reaction RNA(n) + a ribonucleoside 5'-triphosphate = RNA(n+1) + diphosphate. Functionally, DNA-dependent RNA polymerase catalyzes the transcription of DNA into RNA using the four ribonucleoside triphosphates as substrates. The polypeptide is DNA-directed RNA polymerase subunit beta' (Rhodomonas salina (Cryptomonas salina)).